Here is a 942-residue protein sequence, read N- to C-terminus: Inter alpha-trypsin inhibitor, heavy chain 4 (942 aa).

An N-terminal signal peptide occupies residues 1–28; the sequence is MKSPAPAHMWNLVLFLPSLLAVLPTTTA. The VIT domain occupies 29–148; that stretch reads EKNGIDIYSL…KITFELIYQE (120 aa). Asparagine 81 carries an N-linked (GlcNAc...) asparagine glycan. Residues 274–457 form the VWFA domain; the sequence is NVIFVIDKSG…LQLQDFYHEV (184 aa). 2 N-linked (GlcNAc...) asparagine glycosylation sites follow: asparagine 517 and asparagine 577. Residues 552–586 are a coiled coil; it reads TIQQQLEQRISASGAELEALEAQVLNLSLKYNFVT. Disordered stretches follow at residues 658-698 and 726-745; these read RQYI…SDFS and EKSK…HPQV. Over residues 663–690 the composition is skewed to pro residues; that stretch reads PGFPGPPGPPGFPAPPGPPGFPAPPGPP. O-linked (GalNAc...) threonine glycosylation is present at threonine 732. A disulfide bridge connects residues cysteine 761 and cysteine 937. Asparagine 874 carries N-linked (GlcNAc...) asparagine glycosylation.

It belongs to the ITIH family. In terms of assembly, interacts (via C-terminus) with DNAJC1 (via SANT 2 domain). May be O-glycosylated. N-glycosylated. As to expression, highly expressed in liver. Weak expression in lung and heart.

The protein localises to the secreted. Functionally, type II acute-phase protein (APP) involved in inflammatory responses to trauma. May also play a role in liver development or regeneration. The protein is Inter alpha-trypsin inhibitor, heavy chain 4 (Itih4) of Mus musculus (Mouse).